The chain runs to 331 residues: Probable deacetylase MTH_1194 (331 aa).

H118 (proton donor/acceptor) is an active-site residue. 3 residues coordinate Zn(2+): D155, H157, and D244.

Belongs to the histone deacetylase family. Zn(2+) serves as cofactor.

Functionally, probable deacetylase. The chain is Probable deacetylase MTH_1194 from Methanothermobacter thermautotrophicus (strain ATCC 29096 / DSM 1053 / JCM 10044 / NBRC 100330 / Delta H) (Methanobacterium thermoautotrophicum).